A 44-amino-acid chain; its full sequence is Large ribosomal subunit protein bL34 (44 aa).

It belongs to the bacterial ribosomal protein bL34 family.

This chain is Large ribosomal subunit protein bL34, found in Buchnera aphidicola subsp. Cinara cedri (strain Cc).